A 368-amino-acid chain; its full sequence is tRNA-specific 2-thiouridylase MnmA (368 aa).

ATP is bound by residues 10-17 and methionine 36; that span reads AMSGGVDS. The active-site Nucleophile is cysteine 108. A disulfide bond links cysteine 108 and cysteine 206. Position 132 (glycine 132) interacts with ATP. The interaction with tRNA stretch occupies residues 156–158; that stretch reads KDQ. Cysteine 206 acts as the Cysteine persulfide intermediate in catalysis. Residues 312 to 313 form an interaction with tRNA region; it reads RY.

This sequence belongs to the MnmA/TRMU family.

It is found in the cytoplasm. It catalyses the reaction S-sulfanyl-L-cysteinyl-[protein] + uridine(34) in tRNA + AH2 + ATP = 2-thiouridine(34) in tRNA + L-cysteinyl-[protein] + A + AMP + diphosphate + H(+). Functionally, catalyzes the 2-thiolation of uridine at the wobble position (U34) of tRNA, leading to the formation of s(2)U34. The protein is tRNA-specific 2-thiouridylase MnmA of Natranaerobius thermophilus (strain ATCC BAA-1301 / DSM 18059 / JW/NM-WN-LF).